The chain runs to 518 residues: Bifunctional purine biosynthesis protein PurH (518 aa).

The MGS-like domain maps to M1–V146.

It belongs to the PurH family.

It carries out the reaction (6R)-10-formyltetrahydrofolate + 5-amino-1-(5-phospho-beta-D-ribosyl)imidazole-4-carboxamide = 5-formamido-1-(5-phospho-D-ribosyl)imidazole-4-carboxamide + (6S)-5,6,7,8-tetrahydrofolate. The enzyme catalyses IMP + H2O = 5-formamido-1-(5-phospho-D-ribosyl)imidazole-4-carboxamide. Its pathway is purine metabolism; IMP biosynthesis via de novo pathway; 5-formamido-1-(5-phospho-D-ribosyl)imidazole-4-carboxamide from 5-amino-1-(5-phospho-D-ribosyl)imidazole-4-carboxamide (10-formyl THF route): step 1/1. It participates in purine metabolism; IMP biosynthesis via de novo pathway; IMP from 5-formamido-1-(5-phospho-D-ribosyl)imidazole-4-carboxamide: step 1/1. This is Bifunctional purine biosynthesis protein PurH from Thermosynechococcus vestitus (strain NIES-2133 / IAM M-273 / BP-1).